The primary structure comprises 125 residues: MDSCDYKSYAQALDLVNDKELIEEYKKYHKNVWKEVNEALCSIGIKKMKIFLLGTHLFMYYEARADFDPKIDFQKYTELTPKANEWDNLMRKFQQKISDIPENQLGEWWSPMDLVYDLDWFKQQQ.

It belongs to the UPF0734 family.

The polypeptide is UPF0734 protein DDB_G0273871/DDB_G0273177 (Dictyostelium discoideum (Social amoeba)).